The chain runs to 111 residues: Prothymosin alpha (111 aa).

Residue M1 is modified to N-acetylmethionine. Positions M1–D111 are disordered. The residue at position 2 (S2) is an N-acetylserine; in Prothymosin alpha, N-terminally processed. At S2 the chain carries Phosphoserine. The residue at position 8 (T8) is a Phosphothreonine. Residues S9 and S10 each carry the phosphoserine modification. 2 positions are modified to phosphothreonine: T13 and T14. Over residues T13–R31 the composition is skewed to basic and acidic residues. K15 is modified (N6-acetyllysine; alternate). N6-succinyllysine; alternate is present on K15. Residues E43 to E84 are compositionally biased toward acidic residues. Residues D101–D111 show a composition bias toward basic and acidic residues. A Phosphothreonine modification is found at T102. K103 bears the N6-acetyllysine; alternate mark. K103 participates in a covalent cross-link: Glycyl lysine isopeptide (Lys-Gly) (interchain with G-Cter in SUMO2); alternate. The residue at position 107 (T107) is a Phosphothreonine.

It belongs to the pro/parathymosin family. In terms of assembly, interacts with NUPR1; regulates apoptotic process. Covalently linked to a small RNA of about 20 nucleotides.

It is found in the nucleus. Functionally, prothymosin alpha may mediate immune function by conferring resistance to certain opportunistic infections. The polypeptide is Prothymosin alpha (Ptma) (Mus musculus (Mouse)).